The sequence spans 765 residues: 1,4-alpha-glucan branching enzyme GlgB (765 aa).

Residue Asp-431 is the Nucleophile of the active site. Glu-484 (proton donor) is an active-site residue.

Belongs to the glycosyl hydrolase 13 family. GlgB subfamily. Monomer.

The catalysed reaction is Transfers a segment of a (1-&gt;4)-alpha-D-glucan chain to a primary hydroxy group in a similar glucan chain.. It participates in glycan biosynthesis; glycogen biosynthesis. Functionally, catalyzes the formation of the alpha-1,6-glucosidic linkages in glycogen by scission of a 1,4-alpha-linked oligosaccharide from growing alpha-1,4-glucan chains and the subsequent attachment of the oligosaccharide to the alpha-1,6 position. This is 1,4-alpha-glucan branching enzyme GlgB from Synechococcus sp. (strain CC9605).